The primary structure comprises 58 residues: uncharacterized protein (58 aa).

2 consecutive 4Fe-4S ferredoxin-type domains span residues 2-27 (GIKILEKCVGCGNCVVFCPRRAIKTY) and 28-57 (GVAIVDENKCSNCGICARYCPINAIKVDTS). Residues Cys9, Cys12, Cys15, Cys19, Cys37, Cys40, Cys43, and Cys47 each contribute to the [4Fe-4S] cluster site.

[4Fe-4S] cluster is required as a cofactor.

Functionally, ferredoxins are iron-sulfur proteins that transfer electrons probably in the CO-dehydrogenase complex. This is an uncharacterized protein from Methanocaldococcus jannaschii (strain ATCC 43067 / DSM 2661 / JAL-1 / JCM 10045 / NBRC 100440) (Methanococcus jannaschii).